Reading from the N-terminus, the 241-residue chain is Keratin-associated protein 5-5 (241 aa).

15 tandem repeats follow at residues 35 to 38, 41 to 44, 47 to 50, 105 to 108, 115 to 118, 133 to 136, 143 to 146, 161 to 164, 171 to 174, 181 to 184, 191 to 194, 201 to 204, 211 to 214, 221 to 224, and 231 to 234. Positions 35–234 are 15 X 4 AA repeats of C-C-X-P; that stretch reads CCKPVCCCKP…CCCQSSCCAP (200 aa).

It belongs to the KRTAP type 5 family. As to quaternary structure, interacts with hair keratins.

Its function is as follows. In the hair cortex, hair keratin intermediate filaments are embedded in an interfilamentous matrix, consisting of hair keratin-associated protein (KRTAP), which are essential for the formation of a rigid and resistant hair shaft through their extensive disulfide bond cross-linking with abundant cysteine residues of hair keratins. The matrix proteins include the high-sulfur and high-glycine-tyrosine keratins. This Mus musculus (Mouse) protein is Keratin-associated protein 5-5.